A 758-amino-acid chain; its full sequence is 5-methyltetrahydropteroyltriglutamate--homocysteine methyltransferase (758 aa).

5-methyltetrahydropteroyltri-L-glutamate is bound by residues 17–20 and Lys-117; that span reads RELK. L-homocysteine is bound by residues 434–436 and Glu-487; that span reads IGS. L-methionine-binding positions include 434 to 436 and Glu-487; that span reads IGS. 5-methyltetrahydropteroyltri-L-glutamate is bound by residues 518-519 and Trp-564; that span reads RC. Asp-602 provides a ligand contact to L-homocysteine. Asp-602 is an L-methionine binding site. Glu-608 provides a ligand contact to 5-methyltetrahydropteroyltri-L-glutamate. Residues His-644, Cys-646, and Glu-668 each coordinate Zn(2+). Residue His-697 is the Proton donor of the active site. Cys-729 is a Zn(2+) binding site.

Belongs to the vitamin-B12 independent methionine synthase family. Zn(2+) is required as a cofactor.

It catalyses the reaction 5-methyltetrahydropteroyltri-L-glutamate + L-homocysteine = tetrahydropteroyltri-L-glutamate + L-methionine. Its pathway is amino-acid biosynthesis; L-methionine biosynthesis via de novo pathway; L-methionine from L-homocysteine (MetE route): step 1/1. Functionally, catalyzes the transfer of a methyl group from 5-methyltetrahydrofolate to homocysteine resulting in methionine formation. The sequence is that of 5-methyltetrahydropteroyltriglutamate--homocysteine methyltransferase from Serratia proteamaculans (strain 568).